The following is a 229-amino-acid chain: Adenosylcobinamide-GDP ribazoletransferase (229 aa).

The next 6 helical transmembrane spans lie at 31–51 (AMLLAPLAALPLGLLVAAVLA), 55–75 (AVELPPLAVGLLAVGALAASS), 111–131 (AGVLATVVVAGVQAAALATLL), 134–154 (PLLAGALVCLSRCALWIVCCT), 176–196 (VAVLGGLLLSAVGGLVVLVLV), and 208–228 (GDVMGAAVELALAATLLAWAA).

This sequence belongs to the CobS family. Mg(2+) serves as cofactor.

It is found in the cell membrane. It catalyses the reaction alpha-ribazole + adenosylcob(III)inamide-GDP = adenosylcob(III)alamin + GMP + H(+). The catalysed reaction is alpha-ribazole 5'-phosphate + adenosylcob(III)inamide-GDP = adenosylcob(III)alamin 5'-phosphate + GMP + H(+). It functions in the pathway cofactor biosynthesis; adenosylcobalamin biosynthesis; adenosylcobalamin from cob(II)yrinate a,c-diamide: step 7/7. Its function is as follows. Joins adenosylcobinamide-GDP and alpha-ribazole to generate adenosylcobalamin (Ado-cobalamin). Also synthesizes adenosylcobalamin 5'-phosphate from adenosylcobinamide-GDP and alpha-ribazole 5'-phosphate. The polypeptide is Adenosylcobinamide-GDP ribazoletransferase (Nocardioides sp. (strain ATCC BAA-499 / JS614)).